Reading from the N-terminus, the 400-residue chain is Enoyl-[acyl-carrier-protein] reductase [NADH] 1 (400 aa).

Residues 48-53 (GASSGY), 74-75 (FE), 111-112 (DA), and 139-140 (LA) contribute to the NAD(+) site. Tyrosine 225 is a binding site for substrate. Tyrosine 235 functions as the Proton donor in the catalytic mechanism. Residues lysine 244 and 273-275 (VVT) contribute to the NAD(+) site.

The protein belongs to the TER reductase family. Monomer.

It carries out the reaction a 2,3-saturated acyl-[ACP] + NAD(+) = a (2E)-enoyl-[ACP] + NADH + H(+). Its pathway is lipid metabolism; fatty acid biosynthesis. Functionally, involved in the final reduction of the elongation cycle of fatty acid synthesis (FAS II). Catalyzes the reduction of a carbon-carbon double bond in an enoyl moiety that is covalently linked to an acyl carrier protein (ACP). The polypeptide is Enoyl-[acyl-carrier-protein] reductase [NADH] 1 (Vibrio parahaemolyticus serotype O3:K6 (strain RIMD 2210633)).